A 683-amino-acid polypeptide reads, in one-letter code: PTS system mannose-specific EIIBCA component (683 aa).

Positions 1 to 89 constitute a PTS EIIB type-1 domain; sequence MASKLTTTSQ…LKLDGMKHFA (89 aa). Residue Cys-28 is the Phosphocysteine intermediate; for EIIB activity of the active site. One can recognise a PTS EIIC type-1 domain in the interval 117–476; it reads EFLSDTFRPI…NEERDEARAK (360 aa). A run of 10 helical transmembrane segments spans residues 126–146, 162–182, 193–213, 225–245, 260–280, 303–323, 344–364, 376–396, 409–429, and 442–462; these read ILWALLGASLIITLLVLADTF, YVFLHSMWRSVFYFLPIMVGA, WIGAAIPAALLTPEFLALGSA, VLNDYSGQVFPPLIAAIGLYW, MVFVPFFSLLIMIPATAFLLG, FILSIVIPLLYPFLVPLGLHW, PMGAWNFACFGLVTGVFLLSI, LGGMLAGLLGGISEPSLYGVL, GCLAGGIVMGIFDIKAYAFVF, and LGYTIGIAVAFFVSMFLVLAL. The PTS EIIA type-1 domain maps to 550–654; sequence DPIFAAGKLG…PLITPVVVSN (105 aa). Residue His-602 is the Tele-phosphohistidine intermediate; for EIIA activity of the active site.

Its subcellular location is the cell membrane. It carries out the reaction D-mannose(out) + N(pros)-phospho-L-histidyl-[protein] = D-mannose 6-phosphate(in) + L-histidyl-[protein]. In terms of biological role, the phosphoenolpyruvate-dependent sugar phosphotransferase system (sugar PTS), a major carbohydrate active -transport system, catalyzes the phosphorylation of incoming sugar substrates concomitantly with their translocation across the cell membrane. This system is involved in mannose transport. This is PTS system mannose-specific EIIBCA component (ptsM) from Corynebacterium glutamicum (strain ATCC 13032 / DSM 20300 / JCM 1318 / BCRC 11384 / CCUG 27702 / LMG 3730 / NBRC 12168 / NCIMB 10025 / NRRL B-2784 / 534).